The sequence spans 644 residues: Chaperone protein DnaK (644 aa).

T199 bears the Phosphothreonine; by autocatalysis mark. The segment at 605-644 (KKSSEGQAAQGQTQSQESTKPAEEGVVDAEFEEVKEEDKK) is disordered. The segment covering 609 to 623 (EGQAAQGQTQSQEST) has biased composition (polar residues). The span at 629-644 (GVVDAEFEEVKEEDKK) shows a compositional bias: acidic residues.

Belongs to the heat shock protein 70 family.

In terms of biological role, acts as a chaperone. The polypeptide is Chaperone protein DnaK (Legionella pneumophila subsp. pneumophila (strain Philadelphia 1 / ATCC 33152 / DSM 7513)).